The sequence spans 84 residues: Defensin-like protein 49 (84 aa).

The signal sequence occupies residues 1 to 29 (MGITKSLMIFFHIVLLAVSLSNNIILTSG). 4 cysteine pairs are disulfide-bonded: cysteine 40-cysteine 82, cysteine 44-cysteine 68, cysteine 54-cysteine 80, and cysteine 58-cysteine 81.

It belongs to the DEFL family.

It is found in the secreted. The chain is Defensin-like protein 49 from Arabidopsis thaliana (Mouse-ear cress).